We begin with the raw amino-acid sequence, 834 residues long: DIS3-like exonuclease 2 (834 aa).

The segment covering 1-23 (MHNSEFLSPVQSGTQRGTNRSIL) has biased composition (polar residues). Residues 1–35 (MHNSEFLSPVQSGTQRGTNRSILNNKKSGKGKKKS) form a disordered region. The Mg(2+) site is built by aspartate 354 and aspartate 363.

The protein belongs to the RNR ribonuclease family. DIS3L2 subfamily. Mg(2+) is required as a cofactor. Mn(2+) serves as cofactor.

The protein localises to the cytoplasm. Its subcellular location is the P-body. 3'-5'-exoribonuclease that specifically recognizes RNAs polyuridylated at their 3' end and mediates their degradation. Component of an exosome-independent RNA degradation pathway that mediates degradation of both mRNAs and miRNAs that have been polyuridylated by a terminal uridylyltransferase. Essential for correct mitosis, and negatively regulates cell proliferation. The polypeptide is DIS3-like exonuclease 2 (Xenopus tropicalis (Western clawed frog)).